A 428-amino-acid polypeptide reads, in one-letter code: MTLNQSIDAYKEAVDLMPGGVNSPVRAFKSVGMNPIFMKEGKGSKIVDIDNNEYIDYVLSWGPLILGHSDERVVKKLQDITAKGTSFGAPTLLENDLAKLVIDRVPSIEMVRMVNSGTEATMSAIRLARGYTDRDLILKFEGSYHGHGDSLLIKAGSGVATLGLPDSPGVPENIAKNTITVPYNDTDSLKLAFENYGDRIAAIIMEPVCGNMGVVPPKDGFLQYVRHITEENGSLLIFDEVMTGFRVGYHCAQGHYDVTPDLTCLGKVIGGGLPVGAYGGKREIMEQIAPTGPIYQAGTLSGNPLAMTAGYETLSSLSEESYEDINNKVDTLVNGFRDAADKFDIPIHINRAGSMVGVFFTDEEVINFETAQTSNLDYFAQYYRSMVNEGIFLPPSQFEGLFLSTAHTDDDIEKTVKAIHKAFEQIEK.

Lys267 is subject to N6-(pyridoxal phosphate)lysine.

This sequence belongs to the class-III pyridoxal-phosphate-dependent aminotransferase family. HemL subfamily. In terms of assembly, homodimer. The cofactor is pyridoxal 5'-phosphate.

The protein localises to the cytoplasm. The catalysed reaction is (S)-4-amino-5-oxopentanoate = 5-aminolevulinate. The protein operates within porphyrin-containing compound metabolism; protoporphyrin-IX biosynthesis; 5-aminolevulinate from L-glutamyl-tRNA(Glu): step 2/2. The chain is Glutamate-1-semialdehyde 2,1-aminomutase 2 from Oceanobacillus iheyensis (strain DSM 14371 / CIP 107618 / JCM 11309 / KCTC 3954 / HTE831).